Consider the following 453-residue polypeptide: Pup--protein ligase (453 aa).

E9 contacts Mg(2+). R53 contributes to the ATP binding site. Y55 is a Mg(2+) binding site. Residue D57 is the Proton acceptor of the active site. E63 is a binding site for Mg(2+). Residues T66 and W420 each contribute to the ATP site.

Belongs to the Pup ligase/Pup deamidase family. Pup-conjugating enzyme subfamily.

The catalysed reaction is ATP + [prokaryotic ubiquitin-like protein]-L-glutamate + [protein]-L-lysine = ADP + phosphate + N(6)-([prokaryotic ubiquitin-like protein]-gamma-L-glutamyl)-[protein]-L-lysine.. It functions in the pathway protein degradation; proteasomal Pup-dependent pathway. It participates in protein modification; protein pupylation. Functionally, catalyzes the covalent attachment of the prokaryotic ubiquitin-like protein modifier Pup to the proteasomal substrate proteins, thereby targeting them for proteasomal degradation. This tagging system is termed pupylation. The ligation reaction involves the side-chain carboxylate of the C-terminal glutamate of Pup and the side-chain amino group of a substrate lysine. The chain is Pup--protein ligase from Nocardioides sp. (strain ATCC BAA-499 / JS614).